The chain runs to 1582 residues: Adhesion G protein-coupled receptor B1 (1582 aa).

Residues 1 to 33 (MRGQAAAPGPIWILAPLLLLLLLLGRWARAASG) form the signal peptide. Over 34 to 948 (ADIGPGTEQC…ATMDKVTVPS (915 aa)) the chain is Extracellular. Asparagine 64 is a glycosylation site (N-linked (GlcNAc...) asparagine). Positions 261–315 (AGGWKLWSLWGECTRDCGGGLQTRTRTCLPTLGVEGGGCEGVLEEGRLCNRKACG) constitute a TSP type-1 1 domain. Disulfide bonds link cysteine 273–cysteine 309, cysteine 277–cysteine 314, and cysteine 288–cysteine 299. Residues 313 to 335 (ACGPTGRSSSRSQSLRSTDARRR) are disordered. Residues 319–329 (RSSSRSQSLRS) are compositionally biased toward low complexity. TSP type-1 domains follow at residues 354–407 (DPAA…AVCP), 409–462 (HGAW…ALCP), 467–520 (DGNW…QQCP), and 522–575 (DGKW…QRCP). Disulfide bonds link cysteine 366–cysteine 400, cysteine 370–cysteine 406, cysteine 381–cysteine 390, cysteine 421–cysteine 456, cysteine 425–cysteine 461, cysteine 436–cysteine 446, cysteine 479–cysteine 514, cysteine 483–cysteine 519, cysteine 494–cysteine 504, cysteine 534–cysteine 569, cysteine 538–cysteine 574, cysteine 549–cysteine 559, cysteine 581–cysteine 616, and cysteine 604–cysteine 634. Asparagine 401 carries N-linked (GlcNAc...) asparagine glycosylation. Asparagine 607 carries an N-linked (GlcNAc...) asparagine glycan. Threonine 609 is modified (phosphothreonine). Residues asparagine 692, asparagine 844, asparagine 877, and asparagine 881 are each glycosylated (N-linked (GlcNAc...) asparagine). Residues 760–939 (RDAYQVTDNL…AILAQLSADA (180 aa)) form the GAIN-B domain. 2 disulfide bridges follow: cysteine 884-cysteine 921 and cysteine 909-cysteine 923. Positions 884–939 (CILWDETDGPSSSAPPQLGPWSWRGCRTVPLDALRTRCLCDRLSTFAILAQLSADA) are GPS. An N-terminal stalk following vasculostatin-120 cleavage which is not required for signaling activity region spans residues 927–943 (STFAILAQLSADATMDK). The chain crosses the membrane as a helical span at residues 949–969 (VTLIVGCGVSSLTLLMLVIIY). Topologically, residues 970 to 980 (VSVWRYIRSER) are cytoplasmic. The helical transmembrane segment at 981–1001 (SVILINFCLSIISSNALILIG) threads the bilayer. Residues 1002–1008 (QTQTRNK) lie on the Extracellular side of the membrane. Residues 1009–1029 (VVCTLVAAFLHFFFLSSFCWV) traverse the membrane as a helical segment. The Cytoplasmic portion of the chain corresponds to 1030–1052 (LTEAWQSYMAVTGRLRSRLVRKR). The chain crosses the membrane as a helical span at residues 1053–1073 (FLCLGWGLPALVVAISVGFTK). At 1074–1093 (AKGYSTMNYCWLSLEGGLLY) the chain is on the extracellular side. The chain crosses the membrane as a helical span at residues 1094–1114 (AFVGPAAAVVLVNMVIGILVF). The Cytoplasmic portion of the chain corresponds to 1115-1136 (NKLVSKDGITDKKLKERAGASL). A helical membrane pass occupies residues 1137–1157 (WSSCVVLPLLALTWMSAVLAV). Residues 1158–1166 (TDRRSALFQ) are Extracellular-facing. The helical transmembrane segment at 1167-1187 (ILFAVFDSLEGFVIVMVHCIL) threads the bilayer. Residues 1188-1582 (RREVQDAVKC…QDIIDLQTEV (395 aa)) lie on the Cytoplasmic side of the membrane. The tract at residues 1363–1582 (YSINIDQMPQ…QDIIDLQTEV (220 aa)) is involved in interaction with MAGI1. The tract at residues 1382-1549 (PDASFPTRSP…AWVKKELEPL (168 aa)) is disordered. The span at 1389 to 1435 (RSPPAREPPGGAPPEVPPVQPPPPPPPPPPPPQQPIPPPPTLEPAPP) shows a compositional bias: pro residues. A compositionally biased stretch (low complexity) spans 1441-1455 (GEPAAHPGPSSGAGA). The residue at position 1467 (serine 1467) is a Phosphoserine. Basic and acidic residues-rich tracts occupy residues 1468–1484 (LERRKSRYAELDFEKIM) and 1491–1520 (QDMFQDLNRKLQHAAEKEKEVPGADSKPEK). The interval 1579 to 1582 (QTEV) is indispensable for interaction with MAGI1.

Belongs to the G-protein coupled receptor 2 family. LN-TM7 subfamily. In terms of assembly, interacts with ELMO1 and DOCK1. When bound to ELMO1 and DOCK1, acts as a module to promote apoptotic cell engulfment. Interacts with MDM2; the interaction results in inhibition of MDM2-mediated ubiquitination and degradation of DLG4/PSD95. Interacts with PARD3 and TIAM1; the interaction is required for correct dendritic localization of PARD3 and TIAM1 and for dendritic spine formation. Interacts with MAGI1, MAGI3 and BAIAP2. Interacts with PHYHIP. Interacts with DLG4 (via PDZ domain). Vasculostatin-120: Interacts with CD36. Vasculostatin-120: Interacts with ARRB2. Interacts with BAIAP3; this interaction is direct. In terms of processing, proteolytically cleaved to produce vasculostatin-40 and vasculostatin-120. Vasculostatin-40 is the major form and is produced through proteolytic cleavage by MMP14 between residues 321 and 329 with cleavage likely to be between Ser-326 and Leu-327. Post-translationally, ubiquitinated. In brain, widespread expression in all neuropil-rich zones including spinal cord gray matter, cerebellar molecular layer, cerebral cortex, thalamic nuclei and basal ganglia with no expression in white matter (at protein level). In the cerebellar molecular layer, highly expressed in interneuron processes whereas Purkinje cells and their dendrites show weaker expression (at protein level). In the olfactory bulb, highly expressed in glomeruli (at protein level). In the retina, highly concentrated in the outer and inner plexiform layers (at protein level). Expressed in brain. Enriched in hippocampus and cortex. Also detected in other tissues including bone marrow and spleen.

The protein localises to the cell membrane. Its subcellular location is the cell projection. It localises to the phagocytic cup. It is found in the cell junction. The protein resides in the focal adhesion. The protein localises to the dendritic spine. Its subcellular location is the postsynaptic density. It localises to the secreted. Its function is as follows. Phosphatidylserine receptor which enhances the engulfment of apoptotic cells. Also mediates the binding and engulfment of Gram-negative bacteria. Stimulates production of reactive oxygen species by macrophages in response to Gram-negative bacteria, resulting in enhanced microbicidal macrophage activity. In the gastric mucosa, required for recognition and engulfment of apoptotic gastric epithelial cells. Promotes myoblast fusion. Activates the Rho pathway in a G-protein-dependent manner. Inhibits MDM2-mediated ubiquitination and degradation of DLG4/PSD95, promoting DLG4 stability and regulating synaptic plasticity. Required for the formation of dendritic spines by ensuring the correct localization of PARD3 and TIAM1. Potent inhibitor of angiogenesis in brain and may play a significant role as a mediator of the p53/TP53 signal in suppression of glioblastoma. Inhibits angiogenesis in a CD36-dependent manner. Functionally, inhibits angiogenesis. The polypeptide is Adhesion G protein-coupled receptor B1 (Mus musculus (Mouse)).